We begin with the raw amino-acid sequence, 78 residues long: Polcalcin Phl p 7 (78 aa).

2 consecutive EF-hand domains span residues 1-35 (MADD…LGST) and 35-70 (TSAD…NPGL). D13, N15, D17, K19, E24, D48, D50, D52, and E59 together coordinate Ca(2+).

In terms of assembly, monomer. Specifically expressed in pollen.

May be involved in the regulation of pollen-tube growth. The polypeptide is Polcalcin Phl p 7 (Phleum pratense (Common timothy)).